A 611-amino-acid chain; its full sequence is Rho GTPase-activating protein gacN (611 aa).

The Rho-GAP domain occupies 24–219 (KTFKKILKPG…VLIEEFHVLY (196 aa)). Positions 236-499 (IREDKRSTSE…TKLQKSSSSS (264 aa)) form a coiled coil. Residues 476–491 (NQLEKEKSKLQDELTK) show a composition bias toward basic and acidic residues. Residues 476-550 (NQLEKEKSKL…TTPPPPLDED (75 aa)) are disordered. 2 stretches are compositionally biased toward low complexity: residues 495–509 (SSSSSSSSSSSSSSS) and 527–540 (TTTTTTTTSPAQQP).

The protein resides in the cytoplasm. In terms of biological role, rho GTPase-activating protein involved in the signal transduction pathway. The protein is Rho GTPase-activating protein gacN (gacN) of Dictyostelium discoideum (Social amoeba).